The following is a 168-amino-acid chain: 2-C-methyl-D-erythritol 2,4-cyclodiphosphate synthase (168 aa).

A divalent metal cation is bound by residues Asp13 and His15. 4-CDP-2-C-methyl-D-erythritol 2-phosphate contacts are provided by residues 13–15 (DVH) and 39–40 (HS). His47 provides a ligand contact to a divalent metal cation. 4-CDP-2-C-methyl-D-erythritol 2-phosphate-binding positions include 61-63 (DIG), 66-70 (FPDTD), Phe144, and Lys147.

Belongs to the IspF family. As to quaternary structure, homotrimer. A divalent metal cation serves as cofactor.

It carries out the reaction 4-CDP-2-C-methyl-D-erythritol 2-phosphate = 2-C-methyl-D-erythritol 2,4-cyclic diphosphate + CMP. It functions in the pathway isoprenoid biosynthesis; isopentenyl diphosphate biosynthesis via DXP pathway; isopentenyl diphosphate from 1-deoxy-D-xylulose 5-phosphate: step 4/6. Functionally, involved in the biosynthesis of isopentenyl diphosphate (IPP) and dimethylallyl diphosphate (DMAPP), two major building blocks of isoprenoid compounds. Catalyzes the conversion of 4-diphosphocytidyl-2-C-methyl-D-erythritol 2-phosphate (CDP-ME2P) to 2-C-methyl-D-erythritol 2,4-cyclodiphosphate (ME-CPP) with a corresponding release of cytidine 5-monophosphate (CMP). The protein is 2-C-methyl-D-erythritol 2,4-cyclodiphosphate synthase of Cupriavidus metallidurans (strain ATCC 43123 / DSM 2839 / NBRC 102507 / CH34) (Ralstonia metallidurans).